The sequence spans 511 residues: Probable lipid II flippase MurJ (511 aa).

11 consecutive transmembrane segments (helical) span residues 25-45 (DILIASIFGASMFTDAFFISF), 85-105 (SSILGFMSFFLLLLTILGGFF), 133-153 (IMFPYILLISLSSLCSSILNS), 156-178 (YFSIPAFSPIFLNISIIFFSVFF), 245-265 (ISLIINTIFSSLLNSGSISWI), 271-291 (LIEFPVGILGVSLSTVLFTSL), 315-335 (LIVSLPGSVILFFLAKPVIIV), 356-376 (LYSCGLISFIFVKILSSAFYA), 400-420 (FLIFYFQHAGIALSLSITSWV), 442-462 (FIFIIYIILATLVMIVILFVV), and 481-501 (LFFGKYVSGITYLFMMNILGI).

Belongs to the MurJ/MviN family.

The protein resides in the cell inner membrane. It participates in cell wall biogenesis; peptidoglycan biosynthesis. Functionally, involved in peptidoglycan biosynthesis. Transports lipid-linked peptidoglycan precursors from the inner to the outer leaflet of the cytoplasmic membrane. The sequence is that of Probable lipid II flippase MurJ from Buchnera aphidicola subsp. Acyrthosiphon pisum (strain APS) (Acyrthosiphon pisum symbiotic bacterium).